A 154-amino-acid chain; its full sequence is Myoglobin (154 aa).

In terms of domain architecture, Globin spans G2–K148. S4 carries the phosphoserine modification. H65 lines the nitrite pocket. H65 serves as a coordination point for O2. T68 is modified (phosphothreonine). A heme b-binding site is contributed by H94.

It belongs to the globin family. In terms of assembly, monomeric.

Its subcellular location is the cytoplasm. It is found in the sarcoplasm. The catalysed reaction is Fe(III)-heme b-[protein] + nitric oxide + H2O = Fe(II)-heme b-[protein] + nitrite + 2 H(+). The enzyme catalyses H2O2 + AH2 = A + 2 H2O. Its function is as follows. Monomeric heme protein which primary function is to store oxygen and facilitate its diffusion within muscle tissues. Reversibly binds oxygen through a pentacoordinated heme iron and enables its timely and efficient release as needed during periods of heightened demand. Depending on the oxidative conditions of tissues and cells, and in addition to its ability to bind oxygen, it also has a nitrite reductase activity whereby it regulates the production of bioactive nitric oxide. Under stress conditions, like hypoxia and anoxia, it also protects cells against reactive oxygen species thanks to its pseudoperoxidase activity. The sequence is that of Myoglobin (MB) from Mesoplodon carlhubbsi (Hubb's beaked whale).